We begin with the raw amino-acid sequence, 248 residues long: PF03932 family protein CutC (248 aa).

It belongs to the CutC family. Homodimer.

Its subcellular location is the cytoplasm. This is PF03932 family protein CutC from Salmonella typhimurium (strain LT2 / SGSC1412 / ATCC 700720).